A 447-amino-acid polypeptide reads, in one-letter code: C4-dicarboxylate transport protein (447 aa).

8 consecutive transmembrane segments (helical) span residues 22 to 42, 52 to 72, 90 to 110, 159 to 179, 199 to 219, 232 to 252, 325 to 347, and 366 to 386; these read FQVIVAIVLGAILGHYEPLVG, FINLVKMIIAPVIFLTIVTGI, AYFLFFSTLALIVGMIVAHVV, GNILQVLFIAVLFGIALASVG, LVHILMKAAPIGAFGAIAFTI, WLVGSFYLTAFLFVAVILGVV, LFIAQATNTELTLGHQIALLLVA, and AATLAVVPEVPVAGMALILGV.

It belongs to the dicarboxylate/amino acid:cation symporter (DAACS) (TC 2.A.23) family.

Its subcellular location is the cell inner membrane. Its function is as follows. Responsible for the transport of dicarboxylates such as succinate, fumarate, and malate from the periplasm across the membrane. The protein is C4-dicarboxylate transport protein of Stenotrophomonas maltophilia (strain R551-3).